The sequence spans 358 residues: Aminodeoxyfutalosine deaminase (358 aa).

The Zn(2+) site is built by H32 and H34. The substrate site is built by R87, D154, and G188. A Zn(2+)-binding site is contributed by H215. E218 serves as the catalytic Proton donor. D296 contributes to the Zn(2+) binding site.

The protein belongs to the metallo-dependent hydrolases superfamily. Adenosine and AMP deaminases family. The cofactor is Zn(2+).

The catalysed reaction is 6-amino-6-deoxyfutalosine + H2O + H(+) = futalosine + NH4(+). Its pathway is quinol/quinone metabolism; menaquinone biosynthesis. Its function is as follows. Catalyzes the deamination of aminodeoxyfutalosine (AFL) into futalosine (FL), a step in the biosynthesis of menaquinone (MK, vitamin K2). To a lesser extent, can also deaminate adenosine, 5'-methylthioadenosine, 5'-deoxyadenosine, and 2'-deoxyadenosine. This chain is Aminodeoxyfutalosine deaminase (add2), found in Streptomyces avermitilis (strain ATCC 31267 / DSM 46492 / JCM 5070 / NBRC 14893 / NCIMB 12804 / NRRL 8165 / MA-4680).